The primary structure comprises 710 residues: Probable threonine--tRNA ligase 1, cytoplasmic (710 aa).

The tract at residues 1–35 (MSDSQENKPVETPTEVKPVAEKKPAAEKKEKKPAV) is disordered. Basic and acidic residues predominate over residues 18–33 (PVAEKKPAAEKKEKKP). One can recognise a TGS domain in the interval 72 to 137 (KEEPINVTLP…EADCNLQLCK (66 aa)).

This sequence belongs to the class-II aminoacyl-tRNA synthetase family.

Its subcellular location is the cytoplasm. The catalysed reaction is tRNA(Thr) + L-threonine + ATP = L-threonyl-tRNA(Thr) + AMP + diphosphate + H(+). This chain is Probable threonine--tRNA ligase 1, cytoplasmic (thrS1), found in Dictyostelium discoideum (Social amoeba).